A 234-amino-acid chain; its full sequence is UPF0173 metal-dependent hydrolase Meso_1362 (234 aa).

Belongs to the UPF0173 family.

The sequence is that of UPF0173 metal-dependent hydrolase Meso_1362 from Chelativorans sp. (strain BNC1).